Consider the following 115-residue polypeptide: Transmembrane protein 218 (115 aa).

The next 3 membrane-spanning stretches (helical) occupy residues 5-25, 38-58, and 81-101; these read VLGV…VLLL, FSII…LLFP, and YVLL…LLTH.

The protein belongs to the TMEM218 family. In terms of assembly, interacts with TMEM67.

It is found in the membrane. The protein localises to the cell projection. It localises to the cilium. Functionally, may be involved in ciliary biogenesis or function. The sequence is that of Transmembrane protein 218 (Tmem218) from Rattus norvegicus (Rat).